Reading from the N-terminus, the 62-residue chain is Photosystem II reaction center protein Z (62 aa).

2 consecutive transmembrane segments (helical) span residues 8–28 (TLLAFIGLSLALVIGVPVLLA) and 41–61 (FSGSALWMLLVFVVGALNSFV).

This sequence belongs to the PsbZ family. As to quaternary structure, PSII is composed of 1 copy each of membrane proteins PsbA, PsbB, PsbC, PsbD, PsbE, PsbF, PsbH, PsbI, PsbJ, PsbK, PsbL, PsbM, PsbT, PsbY, PsbZ, Psb30/Ycf12, at least 3 peripheral proteins of the oxygen-evolving complex and a large number of cofactors. It forms dimeric complexes.

It localises to the plastid. The protein localises to the chloroplast thylakoid membrane. Functionally, may control the interaction of photosystem II (PSII) cores with the light-harvesting antenna, regulates electron flow through the 2 photosystem reaction centers. PSII is a light-driven water plastoquinone oxidoreductase, using light energy to abstract electrons from H(2)O, generating a proton gradient subsequently used for ATP formation. The protein is Photosystem II reaction center protein Z of Ostreococcus tauri.